The sequence spans 466 residues: Uronate isomerase (466 aa).

Belongs to the metallo-dependent hydrolases superfamily. Uronate isomerase family.

It catalyses the reaction D-glucuronate = D-fructuronate. It carries out the reaction aldehydo-D-galacturonate = keto-D-tagaturonate. The protein operates within carbohydrate metabolism; pentose and glucuronate interconversion. This chain is Uronate isomerase, found in Streptococcus agalactiae serotype III (strain NEM316).